Here is a 207-residue protein sequence, read N- to C-terminus: MDNEKGLLIVLSGPSGVGKGTVRKRIFEDPSTSYKYSISMTTRQMREGEVDGVDYFFKTRDAFEALIKDDQFIEYAEYVGNYYGTPVQYVKDTMDEGHDVFLEIEVEGAKQVRKKFPDALFIFLAPPSLDHLRERLVGRGTESDEKIQSRINEARKEVEMMNLYDYVVVNDEVELAKNRIQCIVEAEHLKRERVEAKYRKMILEAKK.

Residues 6 to 185 (GLLIVLSGPS…AKNRIQCIVE (180 aa)) enclose the Guanylate kinase-like domain. Residue 13–20 (GPSGVGKG) participates in ATP binding.

It belongs to the guanylate kinase family.

The protein resides in the cytoplasm. It catalyses the reaction GMP + ATP = GDP + ADP. Its function is as follows. Essential for recycling GMP and indirectly, cGMP. This Staphylococcus aureus (strain bovine RF122 / ET3-1) protein is Guanylate kinase.